Consider the following 685-residue polypeptide: RING finger protein 145 (685 aa).

13 helical membrane passes run 53-73 (YIAL…LTLP), 77-97 (LVQL…HQLS), 123-143 (FTTA…VMQT), 151-171 (AHLL…IVFI), 174-194 (FAMI…LLVP), 225-245 (LVLP…QIYT), 275-295 (YSLL…LTLC), 316-336 (TEGI…LQVI), 340-360 (FLLS…MLEI), 384-404 (SLCL…CQFF), 410-430 (LLII…TLLI), 460-480 (LLEF…TLFG), and 482-502 (WTVM…WLRA). An RING-type; atypical zinc finger spans residues 537–575 (CSICFQDMKSAVITPCSHFFHAACLKKWLYVQETCPLCH). A disordered region spans residues 582-685 (LQPTSSPGTP…VSTSDVNCAS (104 aa)). Over residues 583-602 (QPTSSPGTPTQGTPAANQNP) the composition is skewed to low complexity. Over residues 620–631 (EGIRAEEMKTSA) the composition is skewed to basic and acidic residues.

The protein localises to the membrane. This Danio rerio (Zebrafish) protein is RING finger protein 145 (rnf145).